Here is a 189-residue protein sequence, read N- to C-terminus: Parkinson disease protein 7 homolog (189 aa).

Alanine 2 is subject to N-acetylalanine. Residues cysteine 46 and cysteine 53 are each lipidated (S-palmitoyl cysteine). Tyrosine 67 bears the Phosphotyrosine mark. The active-site Nucleophile is the cysteine 106. Position 106 is a cysteine sulfinic acid (-SO2H); alternate (cysteine 106). Cysteine 106 is lipidated: S-palmitoyl cysteine; alternate. Residue histidine 126 is part of the active site. A Glycyl lysine isopeptide (Lys-Gly) (interchain with G-Cter in SUMO) cross-link involves residue lysine 130. An N6-acetyllysine modification is found at lysine 148. Residue lysine 182 is modified to N6-succinyllysine.

The protein belongs to the peptidase C56 family. In terms of assembly, homodimer. Binds EFCAB6/DJBP and PIAS2. Part of a ternary complex containing PARK7, EFCAB6/DJBP and AR. Interacts (via N-terminus) with OTUD7B. Interacts with BBS1, HIPK1, CLCF1 and MTERF. Forms a complex with PINK1 and PRKN. Interacts (via C-terminus) with NCF1; the interaction is enhanced by LPS and modulates NCF1 phosphorylation and membrane translocation. Interacts with NENF. Deglycase activity does not require glutathione as a cofactor, however, glycated glutathione constitutes a PARK7 substrate. is required as a cofactor. In terms of processing, sumoylated on Lys-130 by PIAS2 or PIAS4; which is essential for cell-growth promoting activity and transforming activity. Undergoes cleavage of a C-terminal peptide and subsequent activation of protease activity in response to oxidative stress. As to expression, ubiquitous. Detected on epididymal sperm. Highly expressed in testis and prostate. Detected at lower levels in heart, lung, brain, liver, kidney, seminal vesicle, caput and corpus epididymis.

The protein resides in the cell membrane. Its subcellular location is the cytoplasm. The protein localises to the membrane raft. It localises to the nucleus. It is found in the mitochondrion. The protein resides in the endoplasmic reticulum. It carries out the reaction N(omega)-(1-hydroxy-2-oxopropyl)-L-arginyl-[protein] + H2O = lactate + L-arginyl-[protein] + H(+). It catalyses the reaction N(6)-(1-hydroxy-2-oxopropyl)-L-lysyl-[protein] + H2O = lactate + L-lysyl-[protein] + H(+). The enzyme catalyses S-(1-hydroxy-2-oxopropyl)-L-cysteinyl-[protein] + H2O = lactate + L-cysteinyl-[protein] + H(+). The catalysed reaction is N(omega)-(1-hydroxy-2-oxoethyl)-L-arginyl-[protein] + H2O = L-arginyl-[protein] + glycolate + H(+). It carries out the reaction N(6)-(1-hydroxy-2-oxoethyl)-L-lysyl-[protein] + H2O = glycolate + L-lysyl-[protein] + H(+). It catalyses the reaction S-(1-hydroxy-2-oxoethyl)-L-cysteinyl-[protein] + H2O = glycolate + L-cysteinyl-[protein] + H(+). The enzyme catalyses N(2)-(1-hydroxy-2-oxopropyl)-dGTP + H2O = lactate + dGTP + H(+). The catalysed reaction is N(2)-(1-hydroxy-2-oxopropyl)-GTP + H2O = lactate + GTP + H(+). It carries out the reaction N(2)-(1-hydroxy-2-oxopropyl)-GDP + H2O = lactate + GDP + H(+). It catalyses the reaction N(2)-(1-hydroxy-2-oxopropyl)-GMP + H2O = lactate + GMP + H(+). The enzyme catalyses N(2)-(1-hydroxy-2-oxoethyl)-dGTP + H2O = dGTP + glycolate + H(+). The catalysed reaction is N(2)-(1-hydroxy-2-oxoethyl)-GTP + H2O = glycolate + GTP + H(+). It carries out the reaction N(2)-(1-hydroxy-2-oxoethyl)-GDP + H2O = glycolate + GDP + H(+). It catalyses the reaction N(2)-(1-hydroxy-2-oxoethyl)-GMP + H2O = glycolate + GMP + H(+). The enzyme catalyses an N(2)-(1-hydroxy-2-oxopropyl)-guanosine in RNA + H2O = a guanosine in RNA + lactate + H(+). The catalysed reaction is an N(2)-(1-hydroxy-2-oxopropyl)-2'-deoxyguanosine in DNA + H2O = a 2'-deoxyguanosine in DNA + lactate + H(+). It carries out the reaction an N(2)-(1-hydroxy-2-oxoethyl)-guanosine in RNA + H2O = a guanosine in RNA + glycolate + H(+). It catalyses the reaction an N(2)-(1-hydroxy-2-oxoethyl)-2'-deoxyguanosine in DNA + H2O = a 2'-deoxyguanosine in DNA + glycolate + H(+). Protein and nucleotide deglycase that catalyzes the deglycation of the Maillard adducts formed between amino groups of proteins or nucleotides and reactive carbonyl groups of glyoxals. Thus, functions as a protein deglycase that repairs methylglyoxal- and glyoxal-glycated proteins, and releases repaired proteins and lactate or glycolate, respectively. Deglycates cysteine, arginine and lysine residues in proteins, and thus reactivates these proteins by reversing glycation by glyoxals. Acts on early glycation intermediates (hemithioacetals and aminocarbinols), preventing the formation of advanced glycation endproducts (AGE) that cause irreversible damage. Also functions as a nucleotide deglycase able to repair glycated guanine in the free nucleotide pool (GTP, GDP, GMP, dGTP) and in DNA and RNA. Is thus involved in a major nucleotide repair system named guanine glycation repair (GG repair), dedicated to reversing methylglyoxal and glyoxal damage via nucleotide sanitization and direct nucleic acid repair. Also displays an apparent glyoxalase activity that in fact reflects its deglycase activity. Plays an important role in cell protection against oxidative stress and cell death acting as oxidative stress sensor and redox-sensitive chaperone and protease; functions probably related to its primary function. It is involved in neuroprotective mechanisms like the stabilization of NFE2L2 and PINK1 proteins, male fertility as a positive regulator of androgen signaling pathway as well as cell growth and transformation through, for instance, the modulation of NF-kappa-B signaling pathway. Eliminates hydrogen peroxide and protects cells against hydrogen peroxide-induced cell death. Required for correct mitochondrial morphology and function as well as for autophagy of dysfunctional mitochondria. Plays a role in regulating expression or stability of the mitochondrial uncoupling proteins SLC25A14 and SLC25A27 in dopaminergic neurons of the substantia nigra pars compacta and attenuates the oxidative stress induced by calcium entry into the neurons via L-type channels during pacemaking. Regulates astrocyte inflammatory responses, may modulate lipid rafts-dependent endocytosis in astrocytes and neuronal cells. In pancreatic islets, involved in the maintenance of mitochondrial reactive oxygen species (ROS) levels and glucose homeostasis in an age- and diet dependent manner. Protects pancreatic beta cells from cell death induced by inflammatory and cytotoxic setting. Binds to a number of mRNAs containing multiple copies of GG or CC motifs and partially inhibits their translation but dissociates following oxidative stress. Metal-binding protein able to bind copper as well as toxic mercury ions, enhances the cell protection mechanism against induced metal toxicity. In macrophages, interacts with the NADPH oxidase subunit NCF1 to direct NADPH oxidase-dependent ROS production, and protects against sepsis. The protein is Parkinson disease protein 7 homolog of Rattus norvegicus (Rat).